We begin with the raw amino-acid sequence, 202 residues long: ER membrane protein complex subunit 7 homolog (202 aa).

A signal peptide spans 1-23 (MAPIFRSTSLIAFSLFFFFFAST). The helical transmembrane segment at 148–168 (IVKSPMGLMVGFMVVVVFLMP) threads the bilayer. The interval 179–202 (MKSAQEQMRSQGVPSLTSLLPASR) is disordered. Residues 182 to 202 (AQEQMRSQGVPSLTSLLPASR) show a composition bias toward polar residues.

The protein belongs to the EMC7 family.

The protein resides in the membrane. This chain is ER membrane protein complex subunit 7 homolog, found in Arabidopsis thaliana (Mouse-ear cress).